The primary structure comprises 720 residues: Glutaryl-7-aminocephalosporanic-acid acylase (720 aa).

Residues 1 to 29 (MLRVLHRAASALVMATVIGLAPGVAFALA) form the signal peptide. The propeptide at 188–198 (EGDPPDLADQG) is spacer peptide. Serine 199 serves as the catalytic Nucleophile. Residues histidine 221 and glutamate 653 contribute to the active site.

It belongs to the peptidase S45 family. As to quaternary structure, heterodimer of a small subunit and a large subunit processed from the same precursor.

The protein resides in the periplasm. The catalysed reaction is (7R)-7-(4-carboxybutanamido)cephalosporanate + H2O = (7R)-7-aminocephalosporanate + glutarate. Catalyzes the deacylation of 7 beta-(4-carboxybutanamido)cephalosporanic acid (glutaryl-7-aminocephalosporanic acid or GL-7-ACA) to 7-aminocephalosporanic acid (7-ACA). Cannot efficiently use cephalosporin C (CPC), penicillin G, or ampicillin as substrates. The polypeptide is Glutaryl-7-aminocephalosporanic-acid acylase (Brevundimonas diminuta (Pseudomonas diminuta)).